A 596-amino-acid polypeptide reads, in one-letter code: Leucine zipper putative tumor suppressor 1 (596 aa).

Glycine 2 carries N-myristoyl glycine lipidation. Disordered regions lie at residues 136–193 (AILH…SYQL) and 295–324 (YEER…SQKS). The span at 153 to 162 (PPDKPKEQEL) shows a compositional bias: basic and acidic residues. Residues 178 to 190 (SMSSLPTHSTSSS) show a composition bias toward low complexity. The stretch at 256 to 374 (ISTDECSIQE…SYEREKTSFG (119 aa)) forms a coiled coil. A compositionally biased stretch (basic and acidic residues) spans 295–310 (YEERPRRCRDELEGPE).

Belongs to the LZTS family. Binds EEF1G, TLK2 and CDK1. Post-translationally, phosphorylated on serine residues. Hyperphosphorylated by the cAMP-dependent kinase PKA during cell-cycle progression. Highly expressed in testis, prostate, spleen, thymus, ovary and brain. Detected at lower levels in heart, placenta, small intestine, colon, liver, kidney, skeletal muscle and pancreas. Not detectable in primary tumors from breast and prostate and in many cancer cell lines.

It localises to the cytoplasm. The protein resides in the cell membrane. Its subcellular location is the cell projection. It is found in the dendritic spine. The protein localises to the postsynaptic density. It localises to the synapse. Functionally, involved in the regulation of cell growth. May stabilize the active CDC2-cyclin B1 complex and thereby contribute to the regulation of the cell cycle and the prevention of uncontrolled cell proliferation. May act as a tumor suppressor. The protein is Leucine zipper putative tumor suppressor 1 (LZTS1) of Homo sapiens (Human).